The sequence spans 814 residues: Exostosin-like-3 homolog (814 aa).

Over 1 to 14 (MAIKLNGSSRSFVP) the chain is Cytoplasmic. A helical; Signal-anchor for type II membrane protein transmembrane segment spans residues 15 to 35 (SLRVSAFLIFIFFVITYIIIY). 6 N-linked (GlcNAc...) asparagine glycosylation sites follow: Asn-36, Asn-227, Asn-297, Asn-322, Asn-454, and Asn-492. The Lumenal portion of the chain corresponds to 36-814 (NVSFSEPSWI…QNHQKCFKYV (779 aa)). UDP-N-acetyl-alpha-D-glucosamine-binding residues include Arg-570, Asn-595, Asn-620, Arg-625, Asp-641, Asp-642, and Asp-643. Asp-643 is a binding site for Mn(2+). Asn-685 carries an N-linked (GlcNAc...) asparagine glycan. Cys-726 and Cys-774 are oxidised to a cystine. Positions 727, 728, and 771 each coordinate UDP-N-acetyl-alpha-D-glucosamine. The active site involves Asp-728.

It belongs to the glycosyltransferase 47 family. As to quaternary structure, interacts with rib-1. The cofactor is Mn(2+).

It localises to the endoplasmic reticulum membrane. The protein resides in the golgi apparatus membrane. It carries out the reaction 3-O-(beta-D-GlcA-(1-&gt;3)-beta-D-Gal-(1-&gt;3)-beta-D-Gal-(1-&gt;4)-beta-D-Xyl)-L-seryl-[protein] + UDP-N-acetyl-alpha-D-glucosamine = 3-O-(alpha-D-GlcNAc-(1-&gt;4)-beta-D-GlcA-(1-&gt;3)-beta-D-Gal-(1-&gt;3)-beta-D-Gal-(1-&gt;4)-beta-D-Xyl)-L-seryl-[protein] + UDP + H(+). The catalysed reaction is 3-O-{[(1-&gt;4)-beta-D-GlcA-(1-&gt;4)-alpha-D-GlcNAc](n)-(1-&gt;4)-beta-D-GlcA-(1-&gt;3)-beta-D-Gal-(1-&gt;3)-beta-D-Gal-(1-&gt;4)-beta-D-Xyl}-L-seryl-[protein] + UDP-N-acetyl-alpha-D-glucosamine = 3-O-{alpha-D-GlcNAc-[(1-&gt;4)-beta-D-GlcA-(1-&gt;4)-alpha-D-GlcNAc](n)-(1-&gt;4)-beta-D-GlcA-(1-&gt;3)-beta-D-Gal-(1-&gt;3)-beta-D-Gal-(1-&gt;4)-beta-D-Xyl}-L-seryl-[protein] + UDP + H(+). It catalyses the reaction 3-O-{alpha-D-GlcNAc-[(1-&gt;4)-beta-D-GlcA-(1-&gt;4)-alpha-D-GlcNAc](n)-(1-&gt;4)-beta-D-GlcA-(1-&gt;3)-beta-D-Gal-(1-&gt;3)-beta-D-Gal-(1-&gt;4)-beta-D-Xyl}-L-seryl-[protein] + UDP-alpha-D-glucuronate = 3-O-{[(1-&gt;4)-beta-D-GlcA-(1-&gt;4)-alpha-D-GlcNAc](n+1)-(1-&gt;4)-beta-D-GlcA-(1-&gt;3)-beta-D-Gal-(1-&gt;3)-beta-D-Gal-(1-&gt;4)-beta-D-Xyl}-L-seryl-[protein] + UDP + H(+). Its pathway is glycan metabolism; heparan sulfate biosynthesis. With respect to regulation, binding to rib-1 is required for GlcAT-II activity and for increasing GlcNAc-II activity in vitro. Glycosyltransferase required for the biosynthesis of heparan sulfate. Initiates heparan sulfate synthesis by transferring GlcNAc to the (GlcA-Gal-Gal-Xyl-)Ser core linker (GlcNAcT-I activity). In association with rib-1, is also responsible for the alternating addition of beta-1-4-linked glucuronic acid (GlcA) and alpha-1-4-linked N-acetylglucosamine (GlcNAc) units to nascent heparan sulfate chains (GlcNAcT-II and GlcAT-II activities). Required for normal ventral epidermal enclosure during the early stages of embryonic development. In addition, involved in the elongation of the pharyngeal isthmus during the later stages of embryonic development. Involved in the directed migration of hermaphrodite-specific neurons. In Caenorhabditis elegans, this protein is Exostosin-like-3 homolog (rib-2).